Here is a 275-residue protein sequence, read N- to C-terminus: Phospholipid scramblase (275 aa).

The chain crosses the membrane as a helical span at residues 256 to 272 (WKMMLLAFALFLDYMYY).

This sequence belongs to the phospholipid scramblase family. Forms homooligomers in the presence of calcium. Ca(2+) serves as cofactor. The cofactor is Mg(2+).

It is found in the membrane. The protein localises to the cell membrane. The catalysed reaction is a 1,2-diacyl-sn-glycero-3-phosphoethanolamine(in) = a 1,2-diacyl-sn-glycero-3-phosphoethanolamine(out). Its function is as follows. Catalyzes calcium-induced ATP-independent rapid bidirectional and non-specific movement of phospholipids (lipid scrambling or lipid flip-flop) between the inner and outer leaflet of the plasma membrane resulting in collapse of the phospholipid asymmetry. Preferentially, mediates calcium-dependent phosphatidylethanolamine externalization. During the liver stage, plays a role in the interaction with, and thus invasion of, host hepatocytes. Dispensable for host erythrocyte invasion and asexual parasite development. The polypeptide is Phospholipid scramblase (Plasmodium falciparum (isolate 3D7)).